The chain runs to 628 residues: ATP-dependent RNA helicase mrh4, mitochondrial (628 aa).

Residues 1 to 40 (MSLAVRPPVCLLCRSGAPTLLPSSVSQVARSMATARLRRK) constitute a mitochondrion transit peptide. Residues 51 to 109 (AKSSINQKRSGKAKFGPWSGMNQTEAHIRGEPRSRSQAALRRSGEKAADTPRKSDSPLY) are disordered. The segment covering 92–105 (RSGEKAADTPRKSD) has biased composition (basic and acidic residues). A Q motif motif is present at residues 137-170 (TSFDHFPLLPVVRHSIFSQALPGLVDVTPTPIQR). A Helicase ATP-binding domain is found at 190–402 (EDGDPQYDQY…RKRYPDIKRL (213 aa)). 203 to 210 (AETGSGKT) is a binding site for ATP. The segment covering 228–253 (DKENERKEEERKAKEKEERLKNRAFD) has biased composition (basic and acidic residues). Residues 228 to 260 (DKENERKEEERKAKEKEERLKNRAFDLEPEEPP) are disordered. The short motif at 349 to 352 (DEAD) is the DEAD box element. The Helicase C-terminal domain maps to 456–628 (YVGPNIKKIL…EGMFRGQALI (173 aa)).

It belongs to the DEAD box helicase family. MRH4 subfamily.

The protein resides in the mitochondrion. It carries out the reaction ATP + H2O = ADP + phosphate + H(+). ATP-binding RNA helicase involved in mitochondrial RNA metabolism. Required for maintenance of mitochondrial DNA. The protein is ATP-dependent RNA helicase mrh4, mitochondrial (mrh4) of Aspergillus oryzae (strain ATCC 42149 / RIB 40) (Yellow koji mold).